The following is a 298-amino-acid chain: Glycine--tRNA ligase alpha subunit (298 aa).

Belongs to the class-II aminoacyl-tRNA synthetase family. In terms of assembly, tetramer of two alpha and two beta subunits.

The protein localises to the cytoplasm. It catalyses the reaction tRNA(Gly) + glycine + ATP = glycyl-tRNA(Gly) + AMP + diphosphate. The polypeptide is Glycine--tRNA ligase alpha subunit (Helicobacter hepaticus (strain ATCC 51449 / 3B1)).